Reading from the N-terminus, the 574-residue chain is VAO-type flavoprotein oxidase VAO615 (574 aa).

Positions 1-17 (MPASLLRFLALAGTAVG) are cleaved as a signal peptide. Cystine bridges form between C28/C572, C64/C77, C108/C118, and C450/C476. An N-linked (GlcNAc...) asparagine glycan is attached at N47. N-linked (GlcNAc...) asparagine glycosylation occurs at N105. Positions 120 to 299 (LGNYPSYVVN…LSMTARLHRD (180 aa)) constitute an FAD-binding PCMH-type domain. N129, N211, N310, N346, and N438 each carry an N-linked (GlcNAc...) asparagine glycan. Positions 157–222 (HDYLGKSTGK…TGHRIVGGTC (66 aa)) form a cross-link, 6-(S-cysteinyl)-8alpha-(pros-histidyl)-FAD (His-Cys).

Belongs to the oxygen-dependent FAD-linked oxidoreductase family. FAD is required as a cofactor. In terms of processing, the FAD cofactor is bound via a bicovalent 6-S-cysteinyl, 8alpha-N1-histidyl FAD linkage.

It is found in the secreted. Functionally, probably oxidoreductase that, when reduced, rapidly reacts with molecular oxygen, a hallmark of flavoprotein oxidases. A large panel of alcohols, including carbohydrates, steroids and secondary alcohols were tested as potential substrates, but none has been identified so far. The polypeptide is VAO-type flavoprotein oxidase VAO615 (Thermothelomyces thermophilus (strain ATCC 42464 / BCRC 31852 / DSM 1799) (Sporotrichum thermophile)).